Consider the following 274-residue polypeptide: Sulfur carrier protein FdhD (274 aa).

The active-site Cysteine persulfide intermediate is Cys-121. 258 to 263 provides a ligand contact to Mo-bis(molybdopterin guanine dinucleotide); sequence FSKPGR.

The protein belongs to the FdhD family.

Its subcellular location is the cytoplasm. In terms of biological role, required for formate dehydrogenase (FDH) activity. Acts as a sulfur carrier protein that transfers sulfur from IscS to the molybdenum cofactor prior to its insertion into FDH. The sequence is that of Sulfur carrier protein FdhD from Yersinia pseudotuberculosis serotype O:1b (strain IP 31758).